The primary structure comprises 223 residues: Phosphoribosylformylglycinamidine synthase subunit PurQ (223 aa).

One can recognise a Glutamine amidotransferase type-1 domain in the interval 4-223 (FAVVVFPGTN…FRSMVEWARK (220 aa)). The Nucleophile role is filled by Cys-85. Catalysis depends on residues His-196 and Glu-198.

In terms of assembly, part of the FGAM synthase complex composed of 1 PurL, 1 PurQ and 2 PurS subunits.

The protein localises to the cytoplasm. It carries out the reaction N(2)-formyl-N(1)-(5-phospho-beta-D-ribosyl)glycinamide + L-glutamine + ATP + H2O = 2-formamido-N(1)-(5-O-phospho-beta-D-ribosyl)acetamidine + L-glutamate + ADP + phosphate + H(+). The enzyme catalyses L-glutamine + H2O = L-glutamate + NH4(+). It functions in the pathway purine metabolism; IMP biosynthesis via de novo pathway; 5-amino-1-(5-phospho-D-ribosyl)imidazole from N(2)-formyl-N(1)-(5-phospho-D-ribosyl)glycinamide: step 1/2. Part of the phosphoribosylformylglycinamidine synthase complex involved in the purines biosynthetic pathway. Catalyzes the ATP-dependent conversion of formylglycinamide ribonucleotide (FGAR) and glutamine to yield formylglycinamidine ribonucleotide (FGAM) and glutamate. The FGAM synthase complex is composed of three subunits. PurQ produces an ammonia molecule by converting glutamine to glutamate. PurL transfers the ammonia molecule to FGAR to form FGAM in an ATP-dependent manner. PurS interacts with PurQ and PurL and is thought to assist in the transfer of the ammonia molecule from PurQ to PurL. The protein is Phosphoribosylformylglycinamidine synthase subunit PurQ of Thermococcus kodakarensis (strain ATCC BAA-918 / JCM 12380 / KOD1) (Pyrococcus kodakaraensis (strain KOD1)).